The following is a 229-amino-acid chain: Large ribosomal subunit protein uL1 (229 aa).

This sequence belongs to the universal ribosomal protein uL1 family. As to quaternary structure, part of the 50S ribosomal subunit.

Functionally, binds directly to 23S rRNA. The L1 stalk is quite mobile in the ribosome, and is involved in E site tRNA release. Its function is as follows. Protein L1 is also a translational repressor protein, it controls the translation of the L11 operon by binding to its mRNA. In Streptococcus suis (strain 98HAH33), this protein is Large ribosomal subunit protein uL1.